Reading from the N-terminus, the 189-residue chain is MKNVSPSYLKHHFLIAMPHMADPNFAQTLTYIVEHNASGAMGLVVNRPQDLNLADILEQLRPDQEPSLLCQHVPIFSGGPVQTDRGFVLHPNGPVYQATVELEGLSLSTSQDVLFAIADGVGPAKSLIALGYAGWEAGQLEAELADNAWLTCPFDADILFNTSSELRLEAAARHLGVNLSLLTSQAGHA.

Belongs to the UPF0301 (AlgH) family.

The sequence is that of UPF0301 protein PFL_5830 from Pseudomonas fluorescens (strain ATCC BAA-477 / NRRL B-23932 / Pf-5).